Consider the following 354-residue polypeptide: Histidinol-phosphate aminotransferase (354 aa).

Lys-210 is modified (N6-(pyridoxal phosphate)lysine).

This sequence belongs to the class-II pyridoxal-phosphate-dependent aminotransferase family. Histidinol-phosphate aminotransferase subfamily. In terms of assembly, homodimer. Pyridoxal 5'-phosphate serves as cofactor.

The catalysed reaction is L-histidinol phosphate + 2-oxoglutarate = 3-(imidazol-4-yl)-2-oxopropyl phosphate + L-glutamate. It functions in the pathway amino-acid biosynthesis; L-histidine biosynthesis; L-histidine from 5-phospho-alpha-D-ribose 1-diphosphate: step 7/9. This is Histidinol-phosphate aminotransferase from Clostridium botulinum (strain ATCC 19397 / Type A).